A 100-amino-acid polypeptide reads, in one-letter code: Large ribosomal subunit protein uL23 (100 aa).

The protein belongs to the universal ribosomal protein uL23 family. In terms of assembly, part of the 50S ribosomal subunit. Contacts protein L29, and trigger factor when it is bound to the ribosome.

One of the early assembly proteins it binds 23S rRNA. One of the proteins that surrounds the polypeptide exit tunnel on the outside of the ribosome. Forms the main docking site for trigger factor binding to the ribosome. This chain is Large ribosomal subunit protein uL23, found in Xylella fastidiosa (strain M23).